A 244-amino-acid polypeptide reads, in one-letter code: MQHRDVGKPTLSYSGRLIAQMTEIDEALKPVLPRELTTVSDEVRAVPAPPLPVLAEPFALRPADPDADAEMISEWMNRPHLVEAWEYPWPPQRWRRHLKAQIDGEYSRPLIGSFKGADVVYVELYRAAKDSIAPRYAADPHDIGIHAAIADLRFVNRGFAPLLLPRVVASVFEIDPRCRRIMFDPDHRNTGARRVCEFAGCTFLGEHDMANRRMALYALPRTPADAPPTGDLQSSPVGESISSS.

A substrate-binding site is contributed by His146. Residue Asp184 is the Proton acceptor of the active site. A disordered region spans residues Ala224 to Ser244. Residues Asp231 to Ser244 are compositionally biased toward polar residues.

This sequence belongs to the lysine N-acyltransferase MbtK family. Monomer.

It participates in siderophore biosynthesis; mycobactin biosynthesis. Functionally, acyltransferase required for the direct transfer of medium- to long-chain fatty acyl moieties from a carrier protein (MbtL) on to the epsilon-amino group of lysine residue in the mycobactin core. This is Lysine N-acyltransferase MbtK (mbtK) from Mycobacterium sp. (strain MCS).